The primary structure comprises 360 residues: Heat-inducible transcription repressor HrcA (360 aa).

It belongs to the HrcA family.

Negative regulator of class I heat shock genes (grpE-dnaK-dnaJ and groELS operons). Prevents heat-shock induction of these operons. The polypeptide is Heat-inducible transcription repressor HrcA (Streptococcus thermophilus (strain CNRZ 1066)).